The following is a 790-amino-acid chain: MAEQVLPQALYLSNMRKAVKIRERTPEDIFKPTNGIIHHFKTMHRYTLEMFRTCQFCPQFREIIHKALIDRNIQATLESQKKLNWCREVRKLVALKTNGDGNCLMHATSQYMWGVQDTDLVLRKALFSTLKETDTRNFKFRWQLESLKSQEFVETGLCYDTRNWNDEWDNLIKMASTDTPMARSGLQYNSLEEIHIFVLCNILRRPIIVISDKMLRSLESGSNFAPLKVGGIYLPLHWPAQECYRYPIVLGYDSHHFVPLVTLKDSGPEIRAVPLVNRDRGRFEDLKVHFLTDPENEMKEKLLKEYLMVIEIPVQGWDHGTTHLINAAKLDEANLPKEINLVDDYFELVQHEYKKWQENSEQGRREGHAQNPMEPSVPQLSLMDVKCETPNCPFFMSVNTQPLCHECSERRQKNQNKLPKLNSKPGPEGLPGMALGASRGEAYEPLAWNPEESTGGPHSAPPTAPSPFLFSETTAMKCRSPGCPFTLNVQHNGFCERCHNARQLHASHAPDHTRHLDPGKCQACLQDVTRTFNGICSTCFKRTTAEASSSLSTSLPPSCHQRSKSDPSRLVRSPSPHSCHRAGNDAPAGCLSQAARTPGDRTGTSKCRKAGCVYFGTPENKGFCTLCFIEYRENKHFAAASGKVSPTASRFQNTIPCLGRECGTLGSTMFEGYCQKCFIEAQNQRFHEAKRTEEQLRSSQRRDVPRTTQSTSRPKCARASCKNILACRSEELCMECQHPNQRMGPGAHRGEPAPEDPPKQRCRAPACDHFGNAKCNGYCNECFQFKQMYG.

Ala-2 carries the post-translational modification N-acetylalanine. Residues 58–300 form a TRAF-binding region; sequence PQFREIIHKA…LTDPENEMKE (243 aa). The 172-residue stretch at 92-263 folds into the OTU domain; it reads LVALKTNGDG…SHHFVPLVTL (172 aa). Asp-100 is an active-site residue. Cys-103 functions as the Nucleophile in the catalytic mechanism. 3 interaction with ubiquitin regions span residues 157–159, 190–192, and 224–227; these read LCY, SLE, and FAPL. His-256 serves as the catalytic Proton acceptor. The span at 357–368 shows a compositional bias: basic and acidic residues; the sequence is QENSEQGRREGH. The interval 357-377 is disordered; that stretch reads QENSEQGRREGHAQNPMEPSV. The segment at 369 to 775 is interaction with TNIP1; the sequence is AQNPMEPSVP…ACDHFGNAKC (407 aa). The A20-type 1 zinc finger occupies 381–416; the sequence is SLMDVKCETPNCPFFMSVNTQPLCHECSERRQKNQN. The interaction with RIPK1 stretch occupies residues 386 to 453; sequence KCETPNCPFF…EPLAWNPEES (68 aa). Zn(2+)-binding residues include Cys-387, Cys-392, Cys-404, and Cys-407. Disordered regions lie at residues 415 to 434 and 447 to 468; these read QNKLPKLNSKPGPEGLPGMA and AWNPEESTGGPHSAPPTAPSPF. Ser-459 is modified (phosphoserine). A20-type zinc fingers lie at residues 472 to 507 and 515 to 548; these read ETTAMKCRSPGCPFTLNVQHNGFCERCHNARQLHAS and HLDPGKCQACLQDVTRTFNGICSTCFKRTTAEAS. Zn(2+)-binding residues include Cys-478, Cys-483, Cys-495, Cys-498, Cys-521, Cys-524, Cys-536, and Cys-539. The segment at 550–583 is disordered; it reads SLSTSLPPSCHQRSKSDPSRLVRSPSPHSCHRAG. At Ser-575 the chain carries Phosphoserine. The segment at 601 to 636 adopts an A20-type 4 zinc-finger fold; that stretch reads RTGTSKCRKAGCVYFGTPENKGFCTLCFIEYRENKH. Positions 605–655 are required for proteasomal degradation of UBE2N and UBE2D3, TRAF6 deubiquitination, and TAX1BP1 interaction with UBE2N; that stretch reads SKCRKAGCVYFGTPENKGFCTLCFIEYRENKHFAAASGKVSPTASRFQNTI. Positions 606–790 are sufficient for inhibitory activity of TNF-induced NF-kappa-B activity; it reads KCRKAGCVYF…ECFQFKQMYG (185 aa). Residues Cys-607, Cys-612, Cys-624, and Cys-627 each contribute to the Zn(2+) site. Residue Ser-645 is modified to Phosphoserine. An A20-type 5 zinc finger spans residues 651-686; that stretch reads FQNTIPCLGRECGTLGSTMFEGYCQKCFIEAQNQRF. The Zn(2+) site is built by Cys-657, Cys-662, Cys-674, and Cys-677. Basic and acidic residues predominate over residues 689-705; it reads AKRTEEQLRSSQRRDVP. The interval 689 to 712 is disordered; it reads AKRTEEQLRSSQRRDVPRTTQSTS. A required for lysosomal localization and for TRAF2 lysosomal degradation region spans residues 697-790; it reads RSSQRRDVPR…ECFQFKQMYG (94 aa). 2 A20-type zinc fingers span residues 710 to 745 and 756 to 790; these read STSRPKCARASCKNILACRSEELCMECQHPNQRMGP and DPPKQRCRAPACDHFGNAKCNGYCNECFQFKQMYG. Zn(2+) contacts are provided by Cys-716, Cys-721, Cys-733, Cys-736, Cys-762, Cys-767, Cys-779, and Cys-782.

Belongs to the peptidase C64 family. In terms of assembly, homodimer. Interacts with TNIP1, TAX1BP1 and TRAF2. Interacts with RNF11, ITCH and TAX1BP1 only after TNF stimulation; these interaction are transient and they are lost after 1 hour of stimulation with TNF. Interacts with YWHAZ and YWHAH. Interacts with IKBKG; the interaction is induced by TNF stimulation and by polyubiquitin. Interacts with RIPK1. Interacts with UBE2N; the interaction requires TAX1BP1. Interacts with TRAF6; the interaction is inhibited by HTLV-1 protein Tax. Proteolytically cleaved by MALT1 upon TCR stimulation; disrupts NF-kappa-B inhibitory function and results in increased IL-2 production. It is proposed that only a fraction of TNFAIP3 colocalized with TCR and CBM complex is cleaved, leaving the main TNFAIP3 pool intact.

It localises to the cytoplasm. Its subcellular location is the nucleus. The protein localises to the lysosome. The enzyme catalyses Thiol-dependent hydrolysis of ester, thioester, amide, peptide and isopeptide bonds formed by the C-terminal Gly of ubiquitin (a 76-residue protein attached to proteins as an intracellular targeting signal).. Its function is as follows. Ubiquitin-editing enzyme that contains both ubiquitin ligase and deubiquitinase activities. Involved in immune and inflammatory responses signaled by cytokines, such as TNF-alpha and IL-1 beta, or pathogens via Toll-like receptors (TLRs) through terminating NF-kappa-B activity. Essential component of a ubiquitin-editing protein complex, comprising also RNF11, ITCH and TAX1BP1, that ensures the transient nature of inflammatory signaling pathways. In cooperation with TAX1BP1 promotes disassembly of E2-E3 ubiquitin protein ligase complexes in IL-1R and TNFR-1 pathways; affected are at least E3 ligases TRAF6, TRAF2 and BIRC2, and E2 ubiquitin-conjugating enzymes UBE2N and UBE2D3. In cooperation with TAX1BP1 promotes ubiquitination of UBE2N and proteasomal degradation of UBE2N and UBE2D3. Upon TNF stimulation, deubiquitinates 'Lys-63'-polyubiquitin chains on RIPK1 and catalyzes the formation of 'Lys-48'-polyubiquitin chains. This leads to RIPK1 proteasomal degradation and consequently termination of the TNF- or LPS-mediated activation of NF-kappa-B. Deubiquitinates TRAF6 probably acting on 'Lys-63'-linked polyubiquitin. Upon T-cell receptor (TCR)-mediated T-cell activation, deubiquitinates 'Lys-63'-polyubiquitin chains on MALT1 thereby mediating disassociation of the CBM (CARD11:BCL10:MALT1) and IKK complexes and preventing sustained IKK activation. Deubiquitinates NEMO/IKBKG; the function is facilitated by TNIP1 and leads to inhibition of NF-kappa-B activation. Upon stimulation by bacterial peptidoglycans, probably deubiquitinates RIPK2. Can also inhibit I-kappa-B-kinase (IKK) through a non-catalytic mechanism which involves polyubiquitin; polyubiquitin promotes association with IKBKG and prevents IKK MAP3K7-mediated phosphorylation. Targets TRAF2 for lysosomal degradation. In vitro able to deubiquitinate 'Lys-11'-, 'Lys-48'- and 'Lys-63' polyubiquitin chains. Inhibitor of programmed cell death. Has a role in the function of the lymphoid system. Required for LPS-induced production of pro-inflammatory cytokines and IFN beta in LPS-tolerized macrophages. In Homo sapiens (Human), this protein is Tumor necrosis factor alpha-induced protein 3 (TNFAIP3).